The sequence spans 789 residues: Isoamylase SU1, chloroplastic (789 aa).

The transit peptide at 1 to 44 directs the protein to the chloroplast; the sequence is MAQQLPCVSSPRPLLAVPAGRWRAGVRGRPNVAGLGRGRLSLHA. Residue aspartate 417 is the Nucleophile of the active site. Glutamate 473 (proton donor) is an active-site residue.

This sequence belongs to the glycosyl hydrolase 13 family.

Its subcellular location is the plastid. It is found in the chloroplast. It catalyses the reaction Hydrolysis of (1-&gt;6)-alpha-D-glucosidic branch linkages in glycogen, amylopectin and their beta-limit dextrins.. It functions in the pathway glycan biosynthesis; starch biosynthesis. In terms of biological role, isoamylase starch-debranching enzyme involved in amylopectin biosynthesis in endosperm. Functions by removing excess branches or improper branches that interfere with the formation of double helices of the cluster chains of amylopectin and crystallization of starch. In Zea mays (Maize), this protein is Isoamylase SU1, chloroplastic.